We begin with the raw amino-acid sequence, 129 residues long: SOSS complex subunit C homolog (129 aa).

The disordered stretch occupies residues 105 to 129 (RLEPLPSPATTPTTPNAPPSHSISK).

The protein belongs to the SOSS-C family.

The protein is SOSS complex subunit C homolog of Drosophila simulans (Fruit fly).